A 524-amino-acid chain; its full sequence is Mitochondrial-processing peptidase subunit alpha (524 aa).

The transit peptide at 1–32 (MATAVWAAARLLRGSAALCARPKFGSPAHRRF) directs the protein to the mitochondrion. Lys-63 is subject to N6-succinyllysine.

This sequence belongs to the peptidase M16 family. As to quaternary structure, heterodimer of PMPCA (alpha) and PMPCB (beta) subunits, forming the mitochondrial processing protease (MPP) in which PMPCA is involved in substrate recognition and binding and PMPCB is the catalytic subunit.

The protein resides in the mitochondrion matrix. It is found in the mitochondrion inner membrane. Its function is as follows. Substrate recognition and binding subunit of the essential mitochondrial processing protease (MPP), which cleaves the mitochondrial sequence off newly imported precursors proteins. The polypeptide is Mitochondrial-processing peptidase subunit alpha (Pmpca) (Rattus norvegicus (Rat)).